Reading from the N-terminus, the 130-residue chain is Fumarate reductase subunit D (130 aa).

3 helical membrane-spanning segments follow: residues 35–55 (FAMI…LGVI), 67–87 (SFAT…LPMW), and 110–130 (IACY…IFMI).

Belongs to the FrdD family. As to quaternary structure, part of an enzyme complex containing four subunits: a flavoprotein (FrdA), an iron-sulfur protein (FrdB), and two hydrophobic anchor proteins (FrdC and FrdD).

The protein resides in the cell inner membrane. Functionally, anchors the catalytic components of the fumarate reductase complex to the cell membrane, binds quinones. The protein is Fumarate reductase subunit D of Vibrio cholerae serotype O1 (strain M66-2).